The following is a 141-amino-acid chain: Large ribosomal subunit protein uL16 (141 aa).

Belongs to the universal ribosomal protein uL16 family. Part of the 50S ribosomal subunit.

Its function is as follows. Binds 23S rRNA and is also seen to make contacts with the A and possibly P site tRNAs. The polypeptide is Large ribosomal subunit protein uL16 (Campylobacter jejuni subsp. jejuni serotype O:6 (strain 81116 / NCTC 11828)).